An 841-amino-acid polypeptide reads, in one-letter code: Neuronal tyrosine-phosphorylated phosphoinositide-3-kinase adapter 1 (841 aa).

Disordered stretches follow at residues Met-1 to Arg-45, Pro-64 to Leu-448, Arg-655 to Ile-679, Arg-745 to Pro-769, and Leu-812 to His-833. Over residues Thr-8–Ser-25 the composition is skewed to basic and acidic residues. Low complexity predominate over residues Lys-26 to Gly-39. The involved in CYFIP1- and NCKAP1-binding stretch occupies residues Ser-76–Pro-186. The segment covering Val-94–Gly-103 has biased composition (gly residues). A compositionally biased stretch (basic residues) spans Pro-114–Ser-123. Residues Ser-167–Phe-176 are compositionally biased toward polar residues. Positions Phe-224–Gly-243 are enriched in gly residues. The span at Ser-252–Tyr-261 shows a compositional bias: acidic residues. Residues Gly-279–Leu-295 show a composition bias toward pro residues. Pro residues predominate over residues Pro-759–Pro-769.

The protein belongs to the NYAP family. In terms of assembly, interacts with ACOT9, ARHGAP26 and PIK3R2. Interacts with components of the WAVE1 complex, CYFIP1 and NCKAP1; this interaction mediates PI3K-WAVE1 association and actin cytoskeleton remodeling. Post-translationally, phosphorylated on tyrosine residues by FYN upon stimulation with CNTN5.

Functionally, activates PI3K and concomitantly recruits the WAVE1 complex to the close vicinity of PI3K and regulates neuronal morphogenesis. The chain is Neuronal tyrosine-phosphorylated phosphoinositide-3-kinase adapter 1 (NYAP1) from Homo sapiens (Human).